The chain runs to 180 residues: Large ribosomal subunit protein uL6 (180 aa).

The protein belongs to the universal ribosomal protein uL6 family. Part of the 50S ribosomal subunit.

This protein binds to the 23S rRNA, and is important in its secondary structure. It is located near the subunit interface in the base of the L7/L12 stalk, and near the tRNA binding site of the peptidyltransferase center. The chain is Large ribosomal subunit protein uL6 from Lachnoclostridium phytofermentans (strain ATCC 700394 / DSM 18823 / ISDg) (Clostridium phytofermentans).